The following is a 527-amino-acid chain: Zinc finger imprinted 2 (527 aa).

The span at 1–16 (MYQPEDDNNSDVTSDD) shows a compositional bias: acidic residues. The segment at 1 to 104 (MYQPEDDNNS…SRSQDAESYQ (104 aa)) is disordered. Composition is skewed to basic and acidic residues over residues 17-26 (DMTRNRRESS), 35-56 (SGDR…DRWS), and 80-99 (FEMD…RSQD). The 71-residue stretch at 176–246 (VTFEDVLVDF…ETDSRHTVIC (71 aa)) folds into the KRAB domain. Positions 247-322 (QGESHDDPLE…GICTSPQSAS (76 aa)) are disordered. A compositionally biased stretch (polar residues) spans 259–275 (QGNQEKLLTPITMNDPK). Residues 297–307 (QSKDPLGKDPQ) show a composition bias toward basic and acidic residues. C2H2-type zinc fingers lie at residues 328–350 (NRCE…ERIH), 356–378 (YECK…QKTH), 412–434 (FECF…LKAH), 466–488 (CQCC…YRTH), and 494–516 (YQCQ…YQLH).

Belongs to the krueppel C2H2-type zinc-finger protein family. In terms of tissue distribution, highest levels of expression in adult testis; modest levels in fetal kidney and brain.

The protein resides in the nucleus. Functionally, may be involved in transcriptional regulation. This Homo sapiens (Human) protein is Zinc finger imprinted 2 (ZIM2).